The chain runs to 382 residues: MLSFMKIRRNPTRPVTIGSITIGDGHPIAVQSMTATKTQNIDATVEQAEALHARGAGVVRIAVDSDKDAEALAEIRKQTQANLAVDLQENFRLAEKVAPHVDKIRYNPGHLYHHARELTWQEKVRYLIDTAGSNNCAVRIGVNCGSVDPAKKEKYDHDDSITPMLESALEHCELVDSLGFHNFVVSLKDSDPSKVVQVNTLFAEKRPDVALHLGVTEAGMPPDGIIKTRIAFEQLIGKGIGDTVRVSLTLPNPRKPEEIDAGKQIVEDIHAGRVRSVVKFDDSKLNIISCPSCSRVENEAFIDLAAKVKEMTTFAQEYSITIAVMGCRVNGPGETDDADLGLWCGPAKVNLKRGPEALGAFGYDEILPKLKQELDDLIAAKQ.

[4Fe-4S] cluster is bound by residues C290, C293, C327, and E334.

The protein belongs to the IspG family. [4Fe-4S] cluster serves as cofactor.

It carries out the reaction (2E)-4-hydroxy-3-methylbut-2-enyl diphosphate + oxidized [flavodoxin] + H2O + 2 H(+) = 2-C-methyl-D-erythritol 2,4-cyclic diphosphate + reduced [flavodoxin]. It participates in isoprenoid biosynthesis; isopentenyl diphosphate biosynthesis via DXP pathway; isopentenyl diphosphate from 1-deoxy-D-xylulose 5-phosphate: step 5/6. Converts 2C-methyl-D-erythritol 2,4-cyclodiphosphate (ME-2,4cPP) into 1-hydroxy-2-methyl-2-(E)-butenyl 4-diphosphate. The sequence is that of 4-hydroxy-3-methylbut-2-en-1-yl diphosphate synthase (flavodoxin) from Rhodopirellula baltica (strain DSM 10527 / NCIMB 13988 / SH1).